Here is a 431-residue protein sequence, read N- to C-terminus: Probable indole-3-pyruvate monooxygenase YUCCA7 (431 aa).

36-41 (GAGPSG) serves as a coordination point for FAD. NADP(+) is bound at residue 207-212 (GCGNSG).

It belongs to the FMO family. The cofactor is FAD. Expressed in shoot apex regions and siliques, and at high levels in roots. Detected in flowers, stems and leaves.

It carries out the reaction indole-3-pyruvate + NADPH + O2 + H(+) = (indol-3-yl)acetate + CO2 + NADP(+) + H2O. It functions in the pathway plant hormone metabolism; auxin biosynthesis. Its function is as follows. Involved in auxin biosynthesis. Belongs to the set of redundant YUCCA genes probably responsible for auxin biosynthesis in roots. This Arabidopsis thaliana (Mouse-ear cress) protein is Probable indole-3-pyruvate monooxygenase YUCCA7 (YUC7).